Here is a 536-residue protein sequence, read N- to C-terminus: ATPase expression protein 3 (536 aa).

2 PPR repeats span residues T212–P246 and T386–P421.

The protein localises to the mitochondrion inner membrane. Functionally, required for respiration. This is ATPase expression protein 3 (AEP3) from Eremothecium gossypii (strain ATCC 10895 / CBS 109.51 / FGSC 9923 / NRRL Y-1056) (Yeast).